A 229-amino-acid chain; its full sequence is ATP-dependent dethiobiotin synthetase BioD (229 aa).

Residue 12-17 (GAGKTI) participates in ATP binding. A Mg(2+)-binding site is contributed by Thr16. Residue Lys38 is part of the active site. ATP-binding positions include Asp46, 105 to 108 (EGVG), and 165 to 166 (SE). Mg(2+)-binding residues include Asp46 and Glu105.

This sequence belongs to the dethiobiotin synthetase family. In terms of assembly, homodimer. Requires Mg(2+) as cofactor.

Its subcellular location is the cytoplasm. The enzyme catalyses (7R,8S)-7,8-diammoniononanoate + CO2 + ATP = (4R,5S)-dethiobiotin + ADP + phosphate + 3 H(+). It catalyses the reaction (7R,8S)-8-amino-7-(carboxyamino)nonanoate + ATP = (4R,5S)-dethiobiotin + ADP + phosphate + H(+). Its pathway is cofactor biosynthesis; biotin biosynthesis; biotin from 7,8-diaminononanoate: step 1/2. Functionally, catalyzes a mechanistically unusual reaction, the ATP-dependent insertion of CO2 between the N7 and N8 nitrogen atoms of 7,8-diaminopelargonic acid (DAPA, also called 7,8-diammoniononanoate) to form a ureido ring. This cyanobacterium does not encode bioA (which catalyzes the formation of the precursor for this reaction in the cannonical pathway), instead it encodes bioU, which replaces bioA and also performs the first half of the cannonical BioD reaction. Thus in this organism BioD has a different substrate. The polypeptide is ATP-dependent dethiobiotin synthetase BioD (Gloeobacter violaceus (strain ATCC 29082 / PCC 7421)).